Reading from the N-terminus, the 453-residue chain is Bifunctional protein GlmU (453 aa).

The interval 1-225 (MHAHVILAAG…AEEALGVNTR (225 aa)) is pyrophosphorylase. UDP-N-acetyl-alpha-D-glucosamine contacts are provided by residues 7–10 (LAAG), K21, Q72, and 77–78 (GT). Position 102 (D102) interacts with Mg(2+). UDP-N-acetyl-alpha-D-glucosamine-binding residues include G138, E152, N167, and N223. N223 serves as a coordination point for Mg(2+). Residues 226-246 (EELARVEGVLLRRLRAEWMGK) are linker. The tract at residues 247 to 453 (GVRMILPETI…GYALRKLGEG (207 aa)) is N-acetyltransferase. Residues R329 and K347 each coordinate UDP-N-acetyl-alpha-D-glucosamine. Residue H359 is the Proton acceptor of the active site. Residues Y362 and N373 each coordinate UDP-N-acetyl-alpha-D-glucosamine. Residues A376, 382 to 383 (NY), S401, A419, and R436 contribute to the acetyl-CoA site.

The protein in the N-terminal section; belongs to the N-acetylglucosamine-1-phosphate uridyltransferase family. It in the C-terminal section; belongs to the transferase hexapeptide repeat family. Homotrimer. Mg(2+) is required as a cofactor.

The protein localises to the cytoplasm. The enzyme catalyses alpha-D-glucosamine 1-phosphate + acetyl-CoA = N-acetyl-alpha-D-glucosamine 1-phosphate + CoA + H(+). It carries out the reaction N-acetyl-alpha-D-glucosamine 1-phosphate + UTP + H(+) = UDP-N-acetyl-alpha-D-glucosamine + diphosphate. It functions in the pathway nucleotide-sugar biosynthesis; UDP-N-acetyl-alpha-D-glucosamine biosynthesis; N-acetyl-alpha-D-glucosamine 1-phosphate from alpha-D-glucosamine 6-phosphate (route II): step 2/2. Its pathway is nucleotide-sugar biosynthesis; UDP-N-acetyl-alpha-D-glucosamine biosynthesis; UDP-N-acetyl-alpha-D-glucosamine from N-acetyl-alpha-D-glucosamine 1-phosphate: step 1/1. The protein operates within bacterial outer membrane biogenesis; LPS lipid A biosynthesis. Functionally, catalyzes the last two sequential reactions in the de novo biosynthetic pathway for UDP-N-acetylglucosamine (UDP-GlcNAc). The C-terminal domain catalyzes the transfer of acetyl group from acetyl coenzyme A to glucosamine-1-phosphate (GlcN-1-P) to produce N-acetylglucosamine-1-phosphate (GlcNAc-1-P), which is converted into UDP-GlcNAc by the transfer of uridine 5-monophosphate (from uridine 5-triphosphate), a reaction catalyzed by the N-terminal domain. This is Bifunctional protein GlmU from Thermus thermophilus (strain ATCC 27634 / DSM 579 / HB8).